A 97-amino-acid chain; its full sequence is NELL2-interacting cell ontogeny regulator 1 (97 aa).

The first 35 residues, 1–35 (MAPLPPCGPPRSPPPRLLLLLLLLSATLLGAPARA), serve as a signal peptide directing secretion.

The protein belongs to the NICOL family. As to quaternary structure, interacts with NELL2; triggers epididymal differentiation. Interacts with cell surface receptor TFRC; the interaction mediates uptake of NICOL1 into fibroblasts.

The protein localises to the secreted. It is found in the cytoplasm. Its subcellular location is the perinuclear region. Its function is as follows. mRNA-binding protein which interacts with a range of target mRNAs including SERPINE1, ACTA2, CCN2 and COL4A1 and may promote extracellular matrix production. Binds to the 3'-UTR of SERPINE1 mRNA and stabilizes the mRNA, possibly by competing for binding with SERBP1 and preventing SERBP1-mediated mRNA degradation. Also binds to the 3'-UTR of ACTA2. Testis-derived lumicrine factor that triggers epididymal differentiation and sperm maturation. The sequence is that of NELL2-interacting cell ontogeny regulator 1 from Bos taurus (Bovine).